A 149-amino-acid chain; its full sequence is Transcriptional repressor NrdR (149 aa).

The segment at 3-34 (CPFCSAVDTKVIDSRLVGEGSSVRRRRQCLVC) is a zinc-finger region. Positions 49 to 139 (PRVVKSNDVR…VYRSFEDIKE (91 aa)) constitute an ATP-cone domain.

This sequence belongs to the NrdR family. Zn(2+) serves as cofactor.

Negatively regulates transcription of bacterial ribonucleotide reductase nrd genes and operons by binding to NrdR-boxes. The protein is Transcriptional repressor NrdR of Enterobacter sp. (strain 638).